The chain runs to 110 residues: Insulin (110 aa).

The signal sequence occupies residues 1–24; that stretch reads MALWTRLLPLLALLALLGPDPAQA. 3 disulfide bridges follow: cysteine 31–cysteine 96, cysteine 43–cysteine 109, and cysteine 95–cysteine 100. Residues 57-87 constitute a propeptide, c peptide; the sequence is EVEEQQGGQVELGGGPGAGLPQPLALEMALQ.

The protein belongs to the insulin family. As to quaternary structure, heterodimer of a B chain and an A chain linked by two disulfide bonds.

The protein localises to the secreted. Its function is as follows. Insulin decreases blood glucose concentration. It increases cell permeability to monosaccharides, amino acids and fatty acids. It accelerates glycolysis, the pentose phosphate cycle, and glycogen synthesis in liver. The chain is Insulin (INS) from Ictidomys tridecemlineatus (Thirteen-lined ground squirrel).